The sequence spans 419 residues: UDP-N-acetylglucosamine 1-carboxyvinyltransferase (419 aa).

22–23 (KN) serves as a coordination point for phosphoenolpyruvate. A UDP-N-acetyl-alpha-D-glucosamine-binding site is contributed by arginine 91. Cysteine 115 serves as the catalytic Proton donor. Cysteine 115 carries the post-translational modification 2-(S-cysteinyl)pyruvic acid O-phosphothioketal. UDP-N-acetyl-alpha-D-glucosamine-binding positions include 120 to 124 (RPVDL), 160 to 163 (KVSV), aspartate 305, and valine 327.

It belongs to the EPSP synthase family. MurA subfamily.

Its subcellular location is the cytoplasm. The enzyme catalyses phosphoenolpyruvate + UDP-N-acetyl-alpha-D-glucosamine = UDP-N-acetyl-3-O-(1-carboxyvinyl)-alpha-D-glucosamine + phosphate. It functions in the pathway cell wall biogenesis; peptidoglycan biosynthesis. Functionally, cell wall formation. Adds enolpyruvyl to UDP-N-acetylglucosamine. This Salmonella agona (strain SL483) protein is UDP-N-acetylglucosamine 1-carboxyvinyltransferase.